Consider the following 228-residue polypeptide: FtsZ-localized protein A (228 aa).

The GST N-terminal domain occupies 3 to 85; that stretch reads VERTLHHFPL…HIEETETEPP (83 aa). The GST C-terminal domain occupies 90 to 223; that stretch reads DPAERAEARR…WPGLAPAAHY (134 aa).

It belongs to the GST superfamily. In terms of assembly, homodimer. Interacts with FtsZ filaments. Probably interacts with the GTPase domain of FtsZ.

It is found in the cytoplasm. In terms of biological role, essential cell division protein that must bind to FtsZ for division to occur. Critical coordinator of envelope constriction through its interaction with FtsZ. Promotes the formation of highly curved FtsZ filaments, reduces the GTPase activity of FtsZ and stabilizes FtsZ polymers. May regulate FtsZ function by modulating its superstructure. Does not bind to glutathione. The protein is FtsZ-localized protein A of Caulobacter vibrioides (strain NA1000 / CB15N) (Caulobacter crescentus).